The following is a 342-amino-acid chain: S-adenosylmethionine:tRNA ribosyltransferase-isomerase (342 aa).

Belongs to the QueA family. In terms of assembly, monomer.

It is found in the cytoplasm. The enzyme catalyses 7-aminomethyl-7-carbaguanosine(34) in tRNA + S-adenosyl-L-methionine = epoxyqueuosine(34) in tRNA + adenine + L-methionine + 2 H(+). It functions in the pathway tRNA modification; tRNA-queuosine biosynthesis. Transfers and isomerizes the ribose moiety from AdoMet to the 7-aminomethyl group of 7-deazaguanine (preQ1-tRNA) to give epoxyqueuosine (oQ-tRNA). This chain is S-adenosylmethionine:tRNA ribosyltransferase-isomerase, found in Campylobacter jejuni (strain RM1221).